Consider the following 286-residue polypeptide: Shikimate dehydrogenase (NADP(+)) (286 aa).

Shikimate is bound by residues 20–22 (SLS) and Ser67. Lys71 (proton acceptor) is an active-site residue. Shikimate contacts are provided by Asn92 and Asp107. Residues 131–135 (GGGGA) and Ala230 contribute to the NADP(+) site. A shikimate-binding site is contributed by Tyr232. An NADP(+)-binding site is contributed by Gly253.

The protein belongs to the shikimate dehydrogenase family. Homodimer.

The enzyme catalyses shikimate + NADP(+) = 3-dehydroshikimate + NADPH + H(+). Its pathway is metabolic intermediate biosynthesis; chorismate biosynthesis; chorismate from D-erythrose 4-phosphate and phosphoenolpyruvate: step 4/7. Involved in the biosynthesis of the chorismate, which leads to the biosynthesis of aromatic amino acids. Catalyzes the reversible NADPH linked reduction of 3-dehydroshikimate (DHSA) to yield shikimate (SA). The polypeptide is Shikimate dehydrogenase (NADP(+)) (Lactococcus lactis subsp. lactis (strain IL1403) (Streptococcus lactis)).